The sequence spans 370 residues: MLDDFKIDLLVKNKPPTSTTAVVAMSGGVDSSVAAALLHKLGYKVIGITLQLYNNNNNSNTKGACCGSLDTQDAKQVASSMGFPHYTLNYEKVFREEVIEDFIDTYTQGKTPIPCIKCNQVIKFRDLLNATKSLGADVLVTGHYIRKIEQDDDIYVYSSKDTKKDQSYFLFATTVEQLRLLRFPLGNFHKEDIRKLAKYFNLQVANKPDSQNICFVTDTYKKTIAELRPHTIKKGNIIDINGNILSQHNGIVNFTIGQRKGIGISSKAPLYVIKLNPDTNEVTVGPKSALLQNKLYIREINWLAKEKIPHNGLNVKVKLRSSHSGSPATIFPNNNNTATILLQDSYCTVTPGQACVIYDHDRMLGGGWIC.

ATP-binding positions include 24-31 and Leu50; that span reads AMSGGVDS. The active-site Nucleophile is Cys118. A disulfide bond links Cys118 and Cys214. Gly142 is an ATP binding site. The interval 164 to 166 is interaction with tRNA; that stretch reads KDQ. Catalysis depends on Cys214, which acts as the Cysteine persulfide intermediate.

The protein belongs to the MnmA/TRMU family.

It is found in the cytoplasm. The catalysed reaction is S-sulfanyl-L-cysteinyl-[protein] + uridine(34) in tRNA + AH2 + ATP = 2-thiouridine(34) in tRNA + L-cysteinyl-[protein] + A + AMP + diphosphate + H(+). Its function is as follows. Catalyzes the 2-thiolation of uridine at the wobble position (U34) of tRNA, leading to the formation of s(2)U34. The sequence is that of tRNA-specific 2-thiouridylase MnmA from Ehrlichia ruminantium (strain Welgevonden).